The primary structure comprises 241 residues: DNA repair protein RecO (241 aa).

Belongs to the RecO family.

In terms of biological role, involved in DNA repair and RecF pathway recombination. The sequence is that of DNA repair protein RecO from Dinoroseobacter shibae (strain DSM 16493 / NCIMB 14021 / DFL 12).